A 73-amino-acid chain; its full sequence is DNA-directed RNA polymerase subunit Rpo10 (73 aa).

Residues Cys-7, Cys-10, Cys-44, and Cys-45 each coordinate Zn(2+).

Belongs to the archaeal Rpo10/eukaryotic RPB10 RNA polymerase subunit family. As to quaternary structure, part of the RNA polymerase complex. Forms an Rpo3-Rpo10-Rpo11-Rpo12 complex upon coexpression. Requires Zn(2+) as cofactor.

The protein localises to the cytoplasm. The catalysed reaction is RNA(n) + a ribonucleoside 5'-triphosphate = RNA(n+1) + diphosphate. In terms of biological role, DNA-dependent RNA polymerase (RNAP) catalyzes the transcription of DNA into RNA using the four ribonucleoside triphosphates as substrates. The chain is DNA-directed RNA polymerase subunit Rpo10 from Methanocaldococcus jannaschii (strain ATCC 43067 / DSM 2661 / JAL-1 / JCM 10045 / NBRC 100440) (Methanococcus jannaschii).